A 262-amino-acid polypeptide reads, in one-letter code: tRNA pseudouridine synthase B (262 aa).

The active-site Nucleophile is Asp77.

The protein belongs to the pseudouridine synthase TruB family. Type 1 subfamily.

It carries out the reaction uridine(55) in tRNA = pseudouridine(55) in tRNA. Its function is as follows. Responsible for synthesis of pseudouridine from uracil-55 in the psi GC loop of transfer RNAs. This is tRNA pseudouridine synthase B from Protochlamydia amoebophila (strain UWE25).